The sequence spans 209 residues: Octanoyltransferase (209 aa).

In terms of domain architecture, BPL/LPL catalytic spans 30–209 (DNEPEIVYLV…IQTEFNKIFK (180 aa)). Substrate contacts are provided by residues 69–76 (RGGKFTFH), 143–145 (AIG), and 156–158 (GIA). The active-site Acyl-thioester intermediate is Cys174.

This sequence belongs to the LipB family.

The protein localises to the cytoplasm. The enzyme catalyses octanoyl-[ACP] + L-lysyl-[protein] = N(6)-octanoyl-L-lysyl-[protein] + holo-[ACP] + H(+). The protein operates within protein modification; protein lipoylation via endogenous pathway; protein N(6)-(lipoyl)lysine from octanoyl-[acyl-carrier-protein]: step 1/2. Functionally, catalyzes the transfer of endogenously produced octanoic acid from octanoyl-acyl-carrier-protein onto the lipoyl domains of lipoate-dependent enzymes. Lipoyl-ACP can also act as a substrate although octanoyl-ACP is likely to be the physiological substrate. This is Octanoyltransferase from Rickettsia prowazekii (strain Madrid E).